We begin with the raw amino-acid sequence, 708 residues long: Wall-associated receptor kinase-like 14 (708 aa).

The first 42 residues, 1-42, serve as a signal peptide directing secretion; the sequence is MLRSIFDFNQRSTKMVMISHKLDLILVFIIVIGGSIFRRVSA. N-linked (GlcNAc...) asparagine glycosylation is found at Asn43, Asn88, Asn101, Asn131, Asn158, Asn167, and Asn184. Over 43–285 the chain is Extracellular; sequence NFTVPCNGRC…WRHCRSNLIT (243 aa). Residues 286 to 306 traverse the membrane as a helical segment; sequence IVGGTVGGAFLLAALAFFFFC. Residues 307–708 lie on the Cytoplasmic side of the membrane; it reads KRRRSTPLRS…TNTLLGNIPR (402 aa). A Protein kinase domain is found at 348-629; sequence FSEKQKLGIG…LEQIRLSGWI (282 aa). ATP is bound by residues 354–362 and Lys376; that span reads LGIGAYGTV. Asp472 serves as the catalytic Proton acceptor. 2 disordered regions span residues 636 to 659 and 686 to 708; these read SPAGSLRSSDRGSERSVKQSSIGS and VQDPWLSAQSSPSTNTLLGNIPR. A compositionally biased stretch (basic and acidic residues) spans 643-652; sequence SSDRGSERSV. Residues 692 to 708 are compositionally biased toward polar residues; the sequence is SAQSSPSTNTLLGNIPR.

The protein belongs to the protein kinase superfamily. Ser/Thr protein kinase family.

Its subcellular location is the membrane. It catalyses the reaction L-seryl-[protein] + ATP = O-phospho-L-seryl-[protein] + ADP + H(+). The catalysed reaction is L-threonyl-[protein] + ATP = O-phospho-L-threonyl-[protein] + ADP + H(+). Functionally, serine/threonine-protein kinase that may function as a signaling receptor of extracellular matrix component. The polypeptide is Wall-associated receptor kinase-like 14 (WAKL14) (Arabidopsis thaliana (Mouse-ear cress)).